Consider the following 857-residue polypeptide: KH domain-containing protein HEN4 (857 aa).

The span at 1–15 (MERNSVKFHAEKRSG) shows a compositional bias: basic and acidic residues. The segment at 1–27 (MERNSVKFHAEKRSGAFDPGSGFGSSK) is disordered. KH domains follow at residues 46–110 (HAAF…KLGA), 149–217 (TVVC…LVSI), 451–521 (DVVF…IMLI), and 541–610 (SITA…IFHI). Residues 644-755 (SDNPLSIGSH…RGLSDASGGL (112 aa)) are disordered. Composition is skewed to polar residues over residues 645–665 (DNPL…NSSS) and 673–688 (SFLS…SRSV). The span at 718–730 (FTMDHSDNSHHLT) shows a compositional bias: basic and acidic residues. Residues 746-755 (RGLSDASGGL) are compositionally biased toward low complexity. One can recognise a KH 5 domain in the interval 775–839 (NTTVEIRVPA…DQTQAAQNLL (65 aa)).

As to quaternary structure, interacts with HUA1. Interacts with FLK and PEP.

It localises to the nucleus speckle. In terms of biological role, functions in floral reproductive organ identity in the third whorl and floral determinacy specification by specifically promoting the processing of AGAMOUS (AG) pre-mRNA. Functions in association with HUA1 and HUA2. This is KH domain-containing protein HEN4 from Arabidopsis thaliana (Mouse-ear cress).